Here is a 625-residue protein sequence, read N- to C-terminus: Chaperone protein HtpG (625 aa).

The segment at 1-337 (MNIQKKEVYS…SNNLPLNVSR (337 aa)) is a; substrate-binding. Positions 338–552 (EILQDNSITQ…SNEMSTQMAK (215 aa)) are b. Residues 553–625 (LFSAAGQSVP…ARTNKLILEQ (73 aa)) form a c region.

Belongs to the heat shock protein 90 family. As to quaternary structure, homodimer.

Its subcellular location is the cytoplasm. In terms of biological role, molecular chaperone. Has ATPase activity. The chain is Chaperone protein HtpG from Buchnera aphidicola subsp. Schizaphis graminum (strain Sg).